A 1732-amino-acid chain; its full sequence is MFFKGGSWLWLYIRTSIILGSELNSPAPHGQNNCYQLNRFQCSFEEAQHYCHVQRGFLAHIWNKEVQDLIRDYLEEGKKWWIGQNVMPLKKHQDNKYPADVAANGPPKPLSCTYLSRNFIRISSKGDKCLLKYYFICQTGDFLDGDAHYERNGNNSHLYQRHKKTKRGVAIARDKMPPGPGHLPTTCHYPLPAHLSKTLCHPISQFPSVLSSITSQVTSAASEPSSQPLPVITQLTMPVSVTHAGQSLAETTSSPKEEGHPNTFTSYLQVSLQKASGQVIDEIAGNFSRAVHGLQALNKLQEACEFLQKLTALTPRFSKPAQVNLINSLIYLSEELLRIPFQNNNSLGFKVPPTVCPFHSLNNVTKAGEGSWLESKRHTEPVEDILEMSLVEFGNIGEAFLEQNQSPESSVTLTSANATLLLSRQNISTLPLSSYTLGHPAPVRLGFPSALALKELLNKHPGVNVQITGLAFNPFKDLDNRNIVGSIGSVLLSANRKLLQVHDLMEDIEIMLWRNVSLETHPTSLNMSTHQLTITVNVTSLEKSLIVSIDPDSPLLMTLYLGFQYQPNCTHFHLNITLPKDKVWQKDEEYTWVLNPEHLQHGIGTYYITAVLSERQEGAQQTPSLVSVITAVTQCYYWEIHNQTWSSAGCQVGPQSTILRTQCLCNHLTFFASDFFVVPRTVNVEDTIKLFLRVTNNPVGVSLLASLLGFYVITVVWARKKDQADMQKVKVTVLADNDPSAQFHYLIQVYTGYRRSAATTAKVVITLYGSEGRSEPHHLCDPQKTVFERGGLDVFLLTTWTSLGNLHSLRLWHDNSGVSPSWYVSQVIVCDMAVKRKWHFLCNCWLAVDLGDCELDRVFIPVSKRELFSFRHLFSSMIVEKFTQDYLWLSIATRHPWNQFTRVQRLSCCMTLLLCNMVINVMFWKINSTTAKRDEQMRPFAVAWSELLVSIHTAVILFPINLVIGRLFPLIEPQETLPLFPPIQASCLSDASVEPLSATMVVEELKETVRFLLRRNTYLLSKCEQPPWSSWDITKLVKLLSSLVSSHLEGQGCHQQGERHWARVVPENHHHFCCYLHRVLQRLKSHLGTLGLTQGHQSCDFLDAASQLQKLQELLETHILPTEQEPSREVTSFAILSSEEGKKPISNGLSKWLTSVCWLLLGFTSLASAFFTALYSLELSKDQATSWMISIILSVLQNIFISQPVKVVFFTFLYSLMMSRMPRLNKENEQQTKRILALLAKCSSSVPGSRDKNNPVYVAPAINSPTKHPERTLKKKKLFKLTGDILVQILFLTLLMTAIYSAKNSNRFYLHQAIWKTFSHQFSEIKLLQDFYPWANHILLPSLYGDYRGKNAVLEPSHCKCGVQLIFQIPRTKTYEKVDEGQLAFCDNGHTCGRPKSLFPGLHLRRFSYICSPRPMVLIPTDELHERLTSKNENGFSYIMRGAFFTSLRLESFTSLQMSKKGCVWSIISQVIYYLLVCYYAFIQGCQLKQQKWRFFTGKRNILDTSIILISFILLGLDMKSISLHKKNMARYRDDQDRFISFYEAVKVNSAATHLVGFPVLLATVQLWNLLRHSPRLRVISRTLSRAWDEVVGFLLIILILLTGYAIAFNLLFGCSISDYRTFFSSAVTVVGLLMGISHQEEVFALDPVLGTFLILTSVILMVLVVINLFVSAILMAFGKERKSLKKEAALIDTLLQKLSNLLGISWPQKTSSEQAATTAVGSDTEVLDELP.

Residues 1-23 (MFFKGGSWLWLYIRTSIILGSEL) form the signal peptide. The Extracellular portion of the chain corresponds to 24 to 697 (NSPAPHGQNN…IKLFLRVTNN (674 aa)). One can recognise a C-type lectin domain in the interval 30-138 (GQNNCYQLNR…CLLKYYFICQ (109 aa)). 2 cysteine pairs are disulfide-bonded: Cys-51/Cys-137 and Cys-112/Cys-129. Asn-286, Asn-363, Asn-515, Asn-537, and Asn-575 each carry an N-linked (GlcNAc...) asparagine glycan. One can recognise a GAIN-B domain in the interval 523-685 (TSLNMSTHQL…FVVPRTVNVE (163 aa)). Cystine bridges form between Cys-635–Cys-663 and Cys-650–Cys-665. The interval 635 to 685 (CYYWEIHNQTWSSAGCQVGPQSTILRTQCLCNHLTFFASDFFVVPRTVNVE) is GPS. The helical transmembrane segment at 698–718 (PVGVSLLASLLGFYVITVVWA) threads the bilayer. Residues 719 to 905 (RKKDQADMQK…PWNQFTRVQR (187 aa)) are Cytoplasmic-facing. The region spanning 743 to 860 (FHYLIQVYTG…GDCELDRVFI (118 aa)) is the PLAT domain. Residues 906–926 (LSCCMTLLLCNMVINVMFWKI) form a helical membrane-spanning segment. Residues 927–939 (NSTTAKRDEQMRP) lie on the Extracellular side of the membrane. Residues 940–960 (FAVAWSELLVSIHTAVILFPI) traverse the membrane as a helical segment. The Cytoplasmic portion of the chain corresponds to 961-1154 (NLVIGRLFPL…ISNGLSKWLT (194 aa)). A helical transmembrane segment spans residues 1155–1175 (SVCWLLLGFTSLASAFFTALY). The Extracellular segment spans residues 1176 to 1198 (SLELSKDQATSWMISIILSVLQN). Residues 1199–1219 (IFISQPVKVVFFTFLYSLMMS) traverse the membrane as a helical segment. At 1220-1289 (RMPRLNKENE…KLTGDILVQI (70 aa)) the chain is on the cytoplasmic side. Residues 1290–1300 (LFLTLLMTAIY) traverse the membrane as a helical segment. At 1301-1461 (SAKNSNRFYL…SFTSLQMSKK (161 aa)) the chain is on the extracellular side. The chain crosses the membrane as a helical span at residues 1462–1491 (GCVWSIISQVIYYLLVCYYAFIQGCQLKQQ). Residues 1492–1500 (KWRFFTGKR) are Cytoplasmic-facing. A helical transmembrane segment spans residues 1501–1519 (NILDTSIILISFILLGLDM). At 1520–1550 (KSISLHKKNMARYRDDQDRFISFYEAVKVNS) the chain is on the extracellular side. Residues 1551 to 1572 (AATHLVGFPVLLATVQLWNLLR) form a helical membrane-spanning segment. At 1573-1589 (HSPRLRVISRTLSRAWD) the chain is on the cytoplasmic side. The chain crosses the membrane as a helical span at residues 1590-1614 (EVVGFLLIILILLTGYAIAFNLLFG). The interval 1613 to 1651 (FGCSISDYRTFFSSAVTVVGLLMGISHQEEVFALDPVLG) is channel pore-region. The Extracellular segment spans residues 1615–1647 (CSISDYRTFFSSAVTVVGLLMGISHQEEVFALD). The helical transmembrane segment at 1648–1667 (PVLGTFLILTSVILMVLVVI) threads the bilayer. Residues 1668-1732 (NLFVSAILMA…SDTEVLDELP (65 aa)) are Cytoplasmic-facing.

This sequence belongs to the polycystin family. As to quaternary structure, heterotetramer with PKD2L1, composed of 3 subunit of PKD2L1 and 1 subunit of PKD1L3. Autoproteolytically processed at the GPS region of the GAIN-B domain; this cleavage modulates receptor activity. As to expression, highly expressed in placenta, weakly in heart and lung.

The protein localises to the cell membrane. The catalysed reaction is Ca(2+)(in) = Ca(2+)(out). It catalyses the reaction Na(+)(in) = Na(+)(out). It carries out the reaction K(+)(in) = K(+)(out). The enzyme catalyses Mg(2+)(in) = Mg(2+)(out). Its activity is regulated as follows. The non-selective cation channel is gated following an off-response property by acid: gated open after the removal of acid stimulus, but not during acid application. Regulation of non-selective cation channel activity by external Ca(2+) is bimodal, first sensitizing and subsequently inactivating the current. In terms of biological role, pore-forming subunit of a heterotetrameric, non-selective cation channel that is permeable to Ca(2+). Also shows permeability towards NA(1+), K(+) and Mg(2+). Heterotetrameric complex channel is activated by external low pH and Ca(2+), but opens only when the extracellular pH rises again and after the removal of acid stimulus. May act as a sour taste receptor in gustatory cells; however, its contribution to sour taste perception is unclear in vivo and may be indirect. The sequence is that of Polycystin-1-like protein 3 from Homo sapiens (Human).